We begin with the raw amino-acid sequence, 270 residues long: FKBP-type peptidyl-prolyl cis-trans isomerase FkpA (270 aa).

A signal peptide spans 1–25 (MKSLFKVTLLATTMAVALHAPITFA). Positions 164 to 249 (SDTVVVNYKG…VFDVELLDVK (86 aa)) constitute a PPIase FKBP-type domain.

Belongs to the FKBP-type PPIase family.

Its subcellular location is the periplasm. It carries out the reaction [protein]-peptidylproline (omega=180) = [protein]-peptidylproline (omega=0). In terms of biological role, PPIases accelerate the folding of proteins. It catalyzes the cis-trans isomerization of proline imidic peptide bonds in oligopeptides. The chain is FKBP-type peptidyl-prolyl cis-trans isomerase FkpA (fkpA) from Escherichia coli O157:H7.